A 24-amino-acid polypeptide reads, in one-letter code: Small ribosomal subunit protein uS19c (24 aa).

It belongs to the universal ribosomal protein uS19 family.

It is found in the plastid. The protein resides in the chloroplast. In terms of biological role, protein S19 forms a complex with S13 that binds strongly to the 16S ribosomal RNA. The polypeptide is Small ribosomal subunit protein uS19c (rps19) (Petunia hybrida (Petunia)).